Consider the following 543-residue polypeptide: RuBisCO large subunit-binding protein subunit alpha, chloroplastic (543 aa).

Residues 1–2 constitute a chloroplast transit peptide; that stretch reads GA.

Belongs to the chaperonin (HSP60) family. Oligomer of probably six alpha and six beta subunits.

Its subcellular location is the plastid. The protein localises to the chloroplast. In terms of biological role, this protein binds RuBisCO small and large subunits and is implicated in the assembly of the enzyme oligomer. The chain is RuBisCO large subunit-binding protein subunit alpha, chloroplastic from Triticum aestivum (Wheat).